The following is a 283-amino-acid chain: RuBisCO-associated protein (283 aa).

A GH18 domain is found at 5–283 (FKVFREFTSD…PEILLLAASK (279 aa)). Glu128 (proton donor) is an active-site residue.

It belongs to the glycosyl hydrolase 18 family. In terms of assembly, forms part of the RuBisCO complex. As to expression, leaves.

The protein is RuBisCO-associated protein of Glycine max (Soybean).